We begin with the raw amino-acid sequence, 393 residues long: Acetylornithine aminotransferase (393 aa).

Pyridoxal 5'-phosphate is bound by residues 102–103 (GA) and Phe136. Arg139 is a N(2)-acetyl-L-ornithine binding site. 219–222 (DEVQ) is a binding site for pyridoxal 5'-phosphate. N6-(pyridoxal phosphate)lysine is present on Lys248. Ser274 contacts N(2)-acetyl-L-ornithine. Thr275 is a binding site for pyridoxal 5'-phosphate.

This sequence belongs to the class-III pyridoxal-phosphate-dependent aminotransferase family. ArgD subfamily. As to quaternary structure, homodimer. Requires pyridoxal 5'-phosphate as cofactor.

It is found in the cytoplasm. It carries out the reaction N(2)-acetyl-L-ornithine + 2-oxoglutarate = N-acetyl-L-glutamate 5-semialdehyde + L-glutamate. It participates in amino-acid biosynthesis; L-arginine biosynthesis; N(2)-acetyl-L-ornithine from L-glutamate: step 4/4. The protein is Acetylornithine aminotransferase of Wolinella succinogenes (strain ATCC 29543 / DSM 1740 / CCUG 13145 / JCM 31913 / LMG 7466 / NCTC 11488 / FDC 602W) (Vibrio succinogenes).